Reading from the N-terminus, the 463-residue chain is Glycine--tRNA ligase (463 aa).

Substrate is bound by residues R100 and E175. ATP contacts are provided by residues 207–209 (RNE), 217–222 (FRTREF), 291–292 (EL), and 335–338 (GADR). 222–226 (FEQME) provides a ligand contact to substrate. 331 to 335 (EPSVG) is a substrate binding site.

Belongs to the class-II aminoacyl-tRNA synthetase family. In terms of assembly, homodimer.

The protein localises to the cytoplasm. The enzyme catalyses tRNA(Gly) + glycine + ATP = glycyl-tRNA(Gly) + AMP + diphosphate. In terms of biological role, catalyzes the attachment of glycine to tRNA(Gly). The protein is Glycine--tRNA ligase of Clostridium kluyveri (strain NBRC 12016).